The chain runs to 212 residues: MSIQEIRHPLIRHKLGLMRRADISTKNFRELAQEVGALLTYEATKDLPLETYDIEGWCGTVSVEKIAGKKITVVPILRAGIGMLEGVLSLIPGAKVSAVGVARNEETLQAHTYLEKLVPEIDERLAMIIDPMLATGSSMVATIDLLKKAGCKDIRAMVLVAAPEGIAAVEQAHPDVIIYTASIDQKLNEHGYIIPGLGDAGDKIFGTKQKDA.

Residues Arg-78, Arg-103, and 130 to 138 each bind 5-phospho-alpha-D-ribose 1-diphosphate; that span reads DPMLATGSS. Uracil is bound by residues Ile-193 and 198 to 200; that span reads GDA. Asp-199 contributes to the 5-phospho-alpha-D-ribose 1-diphosphate binding site.

The protein belongs to the UPRTase family. Mg(2+) serves as cofactor.

The enzyme catalyses UMP + diphosphate = 5-phospho-alpha-D-ribose 1-diphosphate + uracil. It functions in the pathway pyrimidine metabolism; UMP biosynthesis via salvage pathway; UMP from uracil: step 1/1. With respect to regulation, allosterically activated by GTP. Catalyzes the conversion of uracil and 5-phospho-alpha-D-ribose 1-diphosphate (PRPP) to UMP and diphosphate. In Pseudomonas fluorescens (strain Pf0-1), this protein is Uracil phosphoribosyltransferase.